Consider the following 148-residue polypeptide: FAD synthase (148 aa).

Residues 9-10 (TF), 14-17 (HPGH), Asn92, and Tyr119 contribute to the ATP site.

It belongs to the archaeal FAD synthase family. In terms of assembly, homodimer. A divalent metal cation serves as cofactor.

It catalyses the reaction FMN + ATP + H(+) = FAD + diphosphate. Its pathway is cofactor biosynthesis; FAD biosynthesis; FAD from FMN: step 1/1. Its function is as follows. Catalyzes the transfer of the AMP portion of ATP to flavin mononucleotide (FMN) to produce flavin adenine dinucleotide (FAD) coenzyme. In Methanolacinia petrolearia (strain DSM 11571 / OCM 486 / SEBR 4847) (Methanoplanus petrolearius), this protein is FAD synthase.